A 61-amino-acid polypeptide reads, in one-letter code: Small ribosomal subunit protein bS21 (61 aa).

The protein belongs to the bacterial ribosomal protein bS21 family.

The chain is Small ribosomal subunit protein bS21 from Methylacidiphilum infernorum (isolate V4) (Methylokorus infernorum (strain V4)).